The chain runs to 483 residues: Replication factor C large subunit (483 aa).

Residue 43–50 (GKPGIGKT) coordinates ATP. Residues 417 to 442 (ELKKKKKEEDAKGKKARGSKKEKEPI) show a composition bias toward basic and acidic residues. Positions 417–483 (ELKKKKKEED…KSSQSTLFSF (67 aa)) are disordered. The span at 448 to 457 (SIDSFSSQEP) shows a compositional bias: polar residues.

The protein belongs to the activator 1 small subunits family. RfcL subfamily. Heteromultimer composed of small subunits (RfcS) and large subunits (RfcL).

Its function is as follows. Part of the RFC clamp loader complex which loads the PCNA sliding clamp onto DNA. The protein is Replication factor C large subunit of Methanospirillum hungatei JF-1 (strain ATCC 27890 / DSM 864 / NBRC 100397 / JF-1).